Here is a 336-residue protein sequence, read N- to C-terminus: NAC domain-containing protein 100 (336 aa).

In terms of domain architecture, NAC spans 16-166 (LPPGFRFHPT…EWVICRVFQK (151 aa)). The DNA-binding element occupies 113 to 172 (VGMKKTLVFYRGRAPKGQKTNWVMHEYRLEGKFSAHNLPKTAKNEWVICRVFQKSAGGKK). The interval 313–336 (RRFDSQEDPSSSTGPVDLEPFWNY) is disordered.

The protein localises to the nucleus. In terms of biological role, binds to the promoter regions of genes involved in chlorophyll catabolic processes, such as NYC1, SGR1, SGR2 and PAO. This is NAC domain-containing protein 100 from Arabidopsis thaliana (Mouse-ear cress).